The sequence spans 161 residues: Capsid protein (161 aa).

Ala2 bears the N-acetylalanine; by host mark.

Belongs to the virgaviridae capsid protein family.

It is found in the virion. Functionally, capsid protein self-assembles to form rod-shaped virions about 18 nm in diameter with a central canal enclosing the viral genomic RNA. This chain is Capsid protein (CP), found in Cucumber green mottle mosaic virus (strain watermelon SH) (CGMMV).